The primary structure comprises 391 residues: Processive diacylglycerol beta-glucosyltransferase (391 aa).

It belongs to the glycosyltransferase 28 family. UgtP subfamily.

The protein resides in the cell membrane. It catalyses the reaction a 1,2-diacyl-3-O-(beta-D-glucopyranosyl)-sn-glycerol + UDP-alpha-D-glucose = a 1,2-diacyl-3-O-(beta-D-Glc-(1-&gt;6)-beta-D-Glc)-sn-glycerol + UDP + H(+). The enzyme catalyses a 1,2-diacyl-sn-glycerol + UDP-alpha-D-glucose = a 1,2-diacyl-3-O-(beta-D-glucopyranosyl)-sn-glycerol + UDP + H(+). Its pathway is glycolipid metabolism; diglucosyl-diacylglycerol biosynthesis. Its function is as follows. Processive glucosyltransferase involved in the biosynthesis of both the bilayer- and non-bilayer-forming membrane glucolipids. Is able to successively transfer two glucosyl residues to diacylglycerol (DAG), thereby catalyzing the formation of beta-monoglucosyl-DAG (3-O-(beta-D-glucopyranosyl)-1,2-diacyl-sn-glycerol) and beta-diglucosyl-DAG (3-O-(beta-D-glucopyranosyl-beta-(1-&gt;6)-D-glucopyranosyl)-1,2-diacyl-sn-glycerol). Beta-diglucosyl-DAG is the predominant glycolipid found in Bacillales and is also used as a membrane anchor for lipoteichoic acid (LTA). This chain is Processive diacylglycerol beta-glucosyltransferase, found in Staphylococcus aureus (strain MW2).